A 65-amino-acid chain; its full sequence is Alpha-conotoxin Mr1.1 (65 aa).

Positions 1–21 (MGMRMMFTVFLLVVLATTVVS) are cleaved as a signal peptide. A propeptide spanning residues 22–48 (FTSDRASDGRKAAAKDKASDLVALTVK) is cleaved from the precursor. Cystine bridges form between cysteine 50–cysteine 56 and cysteine 51–cysteine 64. A ser-Xaa-Pro motif, crucial for potent interaction with nAChR region spans residues 52–54 (SHP). Position 64 is a cysteine amide (cysteine 64).

Belongs to the conotoxin A superfamily. As to expression, expressed by the venom duct.

The protein resides in the secreted. Functionally, alpha-conotoxins act on postsynaptic membranes, they bind to the nicotinic acetylcholine receptors (nAChR) and thus inhibit them. This toxin potently and reversibly inhibits alpha-9-alpha-10/CHRNA9-CHRNA10 (IC(50)=92 nM (human) and IC(50)=8.3 nM (rat)) and human alpha3-beta-2/CHRNA3-CHRNB2 nAChR (IC(50)=218.9 nM). Also moderately inhibits human alpha-3-beta-4/CHRNA3-CHRNB4 (60% inhibition at 1 uM), rat alpha-7/CHRNA7 (65% inhibition at 1 uM) and rat alpha-3-beta-2/CHRNA3-CHRNB2 nAChR (50-70% inhibition at 10 uM). In two rat pain models, this toxin shows analgesic effect. This is Alpha-conotoxin Mr1.1 from Conus marmoreus (Marble cone).